Consider the following 556-residue polypeptide: PTS system fructose-specific EIIB'BC component (556 aa).

2 consecutive PTS EIIB type-2 domains span residues 1–85 and 106–201; these read MKLF…LANG and IVAV…KAFK. Catalysis depends on Cys-112, which acts as the Phosphocysteine intermediate; for EIIB activity. Phosphocysteine; by EIIA is present on Cys-112. The 333-residue stretch at 224–556 folds into the PTS EIIC type-2 domain; it reads VYKHLMTGVS…AIIKSKNNAE (333 aa). A run of 10 helical transmembrane segments spans residues 237–257, 275–295, 302–322, 324–344, 349–369, 390–410, 431–451, 468–488, 490–510, and 529–549; these read PLVV…FNVI, SGVA…FSIA, VGLI…GGII, GFLA…PASL, PILI…IYLI, VNAI…MGGP, MAAA…ATWI, FVLG…ADPI, VIIS…GLNI, and LKYL…YAII.

It localises to the cell inner membrane. The enzyme catalyses D-fructose(out) + N(pros)-phospho-L-histidyl-[protein] = D-fructose 1-phosphate(in) + L-histidyl-[protein]. Its function is as follows. The phosphoenolpyruvate-dependent sugar phosphotransferase system (sugar PTS), a major carbohydrate active transport system, catalyzes the phosphorylation of incoming sugar substrates concomitantly with their translocation across the cell membrane. The enzyme II FruAB PTS system is involved in fructose transport. This chain is PTS system fructose-specific EIIB'BC component, found in Haemophilus influenzae (strain ATCC 51907 / DSM 11121 / KW20 / Rd).